Consider the following 396-residue polypeptide: Gap junction gamma-1 protein (396 aa).

The Cytoplasmic portion of the chain corresponds to 1-22 (MSWSFLTRLLEEIHNHSTFVGK). A helical membrane pass occupies residues 23 to 45 (IWLTVLIAFRIALTAVGGESIYY). Residues 46–75 (DEQSKFVCNTEQPGCENVCYDAFAPLSHVR) are Extracellular-facing. The chain crosses the membrane as a helical span at residues 76–95 (FWVFQIILVATPSVMYLGYA). Residues 96–175 (IHKIAKMEHG…RRIREDGLMK (80 aa)) lie on the Cytoplasmic side of the membrane. Residues 145-165 (ELESEKENKEQNQPKPKHDGR) are disordered. The span at 147–156 (ESEKENKEQN) shows a compositional bias: basic and acidic residues. The chain crosses the membrane as a helical span at residues 176 to 198 (IYVLQLLARTVFEVGFLIGQYFL). The Extracellular portion of the chain corresponds to 199-228 (YGFQVHPFYVCSRLPCPHKIDCFISRPTEK). The helical transmembrane segment at 229 to 248 (TIFLLIMYGVTGLCLLLNIW) threads the bilayer. Topologically, residues 249–396 (EMLHLGFGTI…SGDGKNSVWI (148 aa)) are cytoplasmic. The interval 355-396 (AYSHQNNPHGPREKKAKVGSKAGSNKSSASSKSGDGKNSVWI) is disordered. A compositionally biased stretch (low complexity) spans 373–396 (GSKAGSNKSSASSKSGDGKNSVWI).

The protein belongs to the connexin family. Gamma-type subfamily. In terms of assembly, a connexon is composed of a hexamer of connexins. Interacts with CNST.

It localises to the cell membrane. It is found in the cell junction. The protein resides in the gap junction. Its function is as follows. One gap junction consists of a cluster of closely packed pairs of transmembrane channels, the connexons, through which materials of low MW diffuse from one cell to a neighboring cell. In Canis lupus familiaris (Dog), this protein is Gap junction gamma-1 protein (GJC1).